The primary structure comprises 466 residues: Soluble pyridine nucleotide transhydrogenase (466 aa).

Residue glutamate 36–cysteine 45 coordinates FAD.

Belongs to the class-I pyridine nucleotide-disulfide oxidoreductase family. FAD is required as a cofactor.

It is found in the cytoplasm. The catalysed reaction is NAD(+) + NADPH = NADH + NADP(+). Its function is as follows. Conversion of NADPH, generated by peripheral catabolic pathways, to NADH, which can enter the respiratory chain for energy generation. The protein is Soluble pyridine nucleotide transhydrogenase of Escherichia coli O6:K15:H31 (strain 536 / UPEC).